The chain runs to 409 residues: 2,3-bisphosphoglycerate-independent phosphoglycerate mutase 1 (409 aa).

The segment covering 163 to 173 (SDADPKVEGKP) has biased composition (basic and acidic residues). The tract at residues 163–184 (SDADPKVEGKPPKKIKALDGSP) is disordered.

This sequence belongs to the BPG-independent phosphoglycerate mutase family. A-PGAM subfamily.

The enzyme catalyses (2R)-2-phosphoglycerate = (2R)-3-phosphoglycerate. It participates in carbohydrate degradation; glycolysis; pyruvate from D-glyceraldehyde 3-phosphate: step 3/5. Its function is as follows. Catalyzes the interconversion of 2-phosphoglycerate and 3-phosphoglycerate. The sequence is that of 2,3-bisphosphoglycerate-independent phosphoglycerate mutase 1 (apgM1) from Methanothermobacter thermautotrophicus (strain ATCC 29096 / DSM 1053 / JCM 10044 / NBRC 100330 / Delta H) (Methanobacterium thermoautotrophicum).